The primary structure comprises 334 residues: tRNA U34 carboxymethyltransferase (334 aa).

Residues Lys-91, Trp-105, Lys-110, Gly-130, 152–154 (DPT), 181–182 (IE), Met-196, Tyr-200, and Arg-315 each bind carboxy-S-adenosyl-L-methionine.

Belongs to the class I-like SAM-binding methyltransferase superfamily. CmoB family. In terms of assembly, homotetramer.

The catalysed reaction is carboxy-S-adenosyl-L-methionine + 5-hydroxyuridine(34) in tRNA = 5-carboxymethoxyuridine(34) in tRNA + S-adenosyl-L-homocysteine + H(+). In terms of biological role, catalyzes carboxymethyl transfer from carboxy-S-adenosyl-L-methionine (Cx-SAM) to 5-hydroxyuridine (ho5U) to form 5-carboxymethoxyuridine (cmo5U) at position 34 in tRNAs. This Klebsiella pneumoniae (strain 342) protein is tRNA U34 carboxymethyltransferase.